Consider the following 185-residue polypeptide: Glycerol-3-phosphate acyltransferase 4 (185 aa).

A run of 6 helical transmembrane segments spans residues 1-21 (MPLL…AYLA), 47-67 (LGRG…SLAI), 69-89 (LALA…AAVL), 113-133 (LLIA…VLLF), 137-157 (VIAA…LYGL), and 158-178 (PGGV…THFI).

It belongs to the PlsY family. Probably interacts with PlsX.

The protein resides in the cell membrane. It catalyses the reaction an acyl phosphate + sn-glycerol 3-phosphate = a 1-acyl-sn-glycero-3-phosphate + phosphate. It participates in lipid metabolism; phospholipid metabolism. In terms of biological role, catalyzes the transfer of an acyl group from acyl-phosphate (acyl-PO(4)) to glycerol-3-phosphate (G3P) to form lysophosphatidic acid (LPA). This enzyme utilizes acyl-phosphate as fatty acyl donor, but not acyl-CoA or acyl-ACP. This Dehalococcoides mccartyi (strain ATCC BAA-2266 / KCTC 15142 / 195) (Dehalococcoides ethenogenes (strain 195)) protein is Glycerol-3-phosphate acyltransferase 4.